Here is a 203-residue protein sequence, read N- to C-terminus: Ribosome maturation factor RimP (203 aa).

A disordered region spans residues 183-203 (FDDIETEGSAEGTTGSEEENK).

The protein belongs to the RimP family.

It localises to the cytoplasm. In terms of biological role, required for maturation of 30S ribosomal subunits. The polypeptide is Ribosome maturation factor RimP (Ruegeria sp. (strain TM1040) (Silicibacter sp.)).